We begin with the raw amino-acid sequence, 549 residues long: Glucose-6-phosphate isomerase (549 aa).

Glu353 acts as the Proton donor in catalysis. Catalysis depends on residues His384 and Lys512.

It belongs to the GPI family.

It localises to the cytoplasm. The catalysed reaction is alpha-D-glucose 6-phosphate = beta-D-fructose 6-phosphate. It participates in carbohydrate biosynthesis; gluconeogenesis. It functions in the pathway carbohydrate degradation; glycolysis; D-glyceraldehyde 3-phosphate and glycerone phosphate from D-glucose: step 2/4. Functionally, catalyzes the reversible isomerization of glucose-6-phosphate to fructose-6-phosphate. This is Glucose-6-phosphate isomerase from Solidesulfovibrio magneticus (strain ATCC 700980 / DSM 13731 / RS-1) (Desulfovibrio magneticus).